Here is a 310-residue protein sequence, read N- to C-terminus: p-hydroxybenzoic acid efflux pump subunit AaeA (310 aa).

Residues 12 to 32 (AITVVLVILAFIAIFNAWVYY) form a helical membrane-spanning segment.

This sequence belongs to the membrane fusion protein (MFP) (TC 8.A.1) family.

The protein resides in the cell inner membrane. Forms an efflux pump with AaeB. This Escherichia coli O7:K1 (strain IAI39 / ExPEC) protein is p-hydroxybenzoic acid efflux pump subunit AaeA.